Consider the following 270-residue polypeptide: Tryptophan synthase alpha chain (270 aa).

Residues glutamate 51 and aspartate 62 each act as proton acceptor in the active site.

It belongs to the TrpA family. As to quaternary structure, tetramer of two alpha and two beta chains.

It carries out the reaction (1S,2R)-1-C-(indol-3-yl)glycerol 3-phosphate + L-serine = D-glyceraldehyde 3-phosphate + L-tryptophan + H2O. The protein operates within amino-acid biosynthesis; L-tryptophan biosynthesis; L-tryptophan from chorismate: step 5/5. The alpha subunit is responsible for the aldol cleavage of indoleglycerol phosphate to indole and glyceraldehyde 3-phosphate. The chain is Tryptophan synthase alpha chain from Methanothermobacter thermautotrophicus (strain ATCC 29096 / DSM 1053 / JCM 10044 / NBRC 100330 / Delta H) (Methanobacterium thermoautotrophicum).